The following is a 312-amino-acid chain: MSGIDPKRFGKVAVLLGGDSAEREVSLNSGRLVLQGLRDAGIDAHPFDPAQRPLAALKDEGFVRAFNALHGGYGENGQIQGALDFYGIRYTGSGVLGSALGLDKFRTKLVWQQTGIPTPPFETVMRGDDYAARAQDIVAKLGVPLFVKPASEGSSVAVEKVKSADALPAALEEAAKHDKIVIVEKSIEGGGEYTACIAADLDLPLIRIVPAGEFYDYHAKYIANDTQYLIPCGLDAAKEAEFKRIARRAFDVLGCTDWGRADFMLDAAGNPYFLEVNTAPGMTDHSLPPKAARAVGIGYSELVVKVLSLTLD.

The ATP-grasp domain occupies 108-308 (KLVWQQTGIP…YSELVVKVLS (201 aa)). 138–193 (VAKLGVPLFVKPASEGSSVAVEKVKSADALPAALEEAAKHDKIVIVEKSIEGGGEY) is a binding site for ATP. Mg(2+) contacts are provided by Asp262, Glu275, and Asn277.

It belongs to the D-alanine--D-alanine ligase family. It depends on Mg(2+) as a cofactor. The cofactor is Mn(2+).

It is found in the cytoplasm. It carries out the reaction 2 D-alanine + ATP = D-alanyl-D-alanine + ADP + phosphate + H(+). Its pathway is cell wall biogenesis; peptidoglycan biosynthesis. In terms of biological role, cell wall formation. This Burkholderia mallei (strain NCTC 10247) protein is D-alanine--D-alanine ligase.